The sequence spans 322 residues: Gluconeogenesis factor (322 aa).

Belongs to the gluconeogenesis factor family.

Its subcellular location is the cytoplasm. Its function is as follows. Required for morphogenesis under gluconeogenic growth conditions. This chain is Gluconeogenesis factor, found in Listeria monocytogenes serovar 1/2a (strain ATCC BAA-679 / EGD-e).